Consider the following 153-residue polypeptide: Cytochrome c-type biogenesis protein CcmE (153 aa).

The Cytoplasmic portion of the chain corresponds to 1 to 7; the sequence is MKPRHKR. Residues 8 to 28 traverse the membrane as a helical; Signal-anchor for type II membrane protein segment; the sequence is LAIAGGVLVAVGAIATLVLNA. Topologically, residues 29 to 153 are periplasmic; that stretch reads FQSNLVFFYS…SSQAATGDPR (125 aa). His-120 and Tyr-124 together coordinate heme. The disordered stretch occupies residues 130–153; it reads AEALKRAKEGGQMQSSQAATGDPR. The span at 141–153 shows a compositional bias: polar residues; sequence QMQSSQAATGDPR.

The protein belongs to the CcmE/CycJ family.

Its subcellular location is the cell inner membrane. Heme chaperone required for the biogenesis of c-type cytochromes. Transiently binds heme delivered by CcmC and transfers the heme to apo-cytochromes in a process facilitated by CcmF and CcmH. This chain is Cytochrome c-type biogenesis protein CcmE, found in Leptothrix cholodnii (strain ATCC 51168 / LMG 8142 / SP-6) (Leptothrix discophora (strain SP-6)).